A 678-amino-acid polypeptide reads, in one-letter code: Proprotein convertase subtilisin/kexin type 4 (678 aa).

A signal peptide spans 1–26 (MRPSQTALWLGLVLSLALLAVGWASA). The propeptide occupies 27-110 (RPPIYVSSWA…QQTLRRRVKR (84 aa)). The 315-residue stretch at 123 to 437 (QWYMNKEIEQ…YGLLDAGLLV (315 aa)) folds into the Peptidase S8 domain. Catalysis depends on charge relay system residues aspartate 155, histidine 196, and serine 370. A P/Homo B domain is found at 446-580 (TKPQKKCTIR…TLLLYGTAED (135 aa)). Asparagine 472 carries N-linked (GlcNAc...) asparagine glycosylation.

The protein belongs to the peptidase S8 family. Furin subfamily. The proPCSK4 form interacts with HSPA5; the interaction takes place at the endoplasmic reticulum. Post-translationally, N-glycosylated. In terms of processing, synthesized in the endoplasmic reticulum as a zymogen, is matured by autocatalytic cleavage between the prodomain and the catalytic domain. Expressed abundantly in the testis. High levels seen in germ cells but not in Leydig, Sertoli or peritubular cells. Expressed in the pachytene spermatocytes and the round spermatids but not in the elongating spermatids. May be expressed within hormonally stimulated ovaries.

It is found in the cytoplasmic vesicle. It localises to the secretory vesicle. Its subcellular location is the acrosome membrane. In terms of biological role, proprotein convertase involved in the processing of hormone and other protein precursors at sites comprised of pairs of basic amino acid residues. In males, important for ADAM2 processing as well as other acrosomal proteins with roles in fertilization and critical for normal fertilization events such as sperm capacitation, acrosome reaction and binding of sperm to zona pellucida. Plays also a role in female fertility, involved in the regulation of trophoblast migration and placental development, may be through the proteolytical processing and activation of proteins such as IGF2. May also participate in folliculogenesis in the ovaries. The chain is Proprotein convertase subtilisin/kexin type 4 (Pcsk4) from Rattus norvegicus (Rat).